Reading from the N-terminus, the 504-residue chain is Anaerobic nitric oxide reductase transcription regulator NorR (504 aa).

Asp57 carries the 4-aspartylphosphate modification. Residues 187 to 416 (MIGLSPGMTQ…LEHAIHRAVV (230 aa)) form the Sigma-54 factor interaction domain. ATP contacts are provided by residues 215–222 (GETGTGKE) and 278–287 (ADNGTLFLDE). A DNA-binding region (H-T-H motif) is located at residues 479 to 498 (WAACARMLETDVANLHRLAK).

The protein operates within nitrogen metabolism; nitric oxide reduction. Functionally, required for the expression of anaerobic nitric oxide (NO) reductase, acts as a transcriptional activator for at least the norVW operon. Activation also requires sigma-54. In Escherichia coli O45:K1 (strain S88 / ExPEC), this protein is Anaerobic nitric oxide reductase transcription regulator NorR.